Reading from the N-terminus, the 266-residue chain is Ankyrin repeat domain-containing protein 45 (266 aa).

Composition is skewed to acidic residues over residues 1–11 (MESEGPPESES) and 18–32 (QEEE…EPEE). A disordered region spans residues 1-43 (MESEGPPESESSEFFSQQEEENEEEEAQEPEETGPKNPLLQPA). ANK repeat units lie at residues 76–105 (VGRN…NLNE) and 109–138 (RGYT…DIEA).

Its subcellular location is the cytoplasm. The protein resides in the midbody. It localises to the midbody ring. It is found in the cleavage furrow. Its function is as follows. May play a role during cell division. In Homo sapiens (Human), this protein is Ankyrin repeat domain-containing protein 45.